A 264-amino-acid polypeptide reads, in one-letter code: Somatomedin-B and thrombospondin type-1 domain-containing protein (264 aa).

Positions 1-20 are cleaved as a signal peptide; sequence MRTLWMALCVLARLWPGALA. Residues 24-75 form the SMB domain; sequence DAGRCCPGRDPACFASGWRQDRVYGTCFCDQACRLTGDCCFDYARACPARPC. Cystine bridges form between C28–C36, C28–C52, C36–C70, C50–C52, C50–C63, C56–C62, and C63–C70. The region spanning 74 to 127 is the TSP type-1 domain; sequence PCIVGEWSPWSGCASQCRPTARVRRRAVQQEPQNGGEPCPALEERAGCLEYATP. N-linked (GlcNAc...) asparagine glycosylation occurs at N227.

The protein belongs to the thrombospondin family.

The protein resides in the secreted. The protein localises to the extracellular space. It localises to the extracellular matrix. This Bos taurus (Bovine) protein is Somatomedin-B and thrombospondin type-1 domain-containing protein (SBSPON).